The sequence spans 350 residues: Casein kinase II subunit alpha' (350 aa).

The Protein kinase domain maps to 40–325 (YQLVRKLGRG…AKEAMEHPYF (286 aa)). Residues 46–54 (LGRGKYSEV) and Lys-69 contribute to the ATP site. The Proton acceptor role is filled by Asp-157.

The protein belongs to the protein kinase superfamily. Ser/Thr protein kinase family. CK2 subfamily. In terms of assembly, tetramer composed of an alpha chain, an alpha' and two beta chains.

The catalysed reaction is L-seryl-[protein] + ATP = O-phospho-L-seryl-[protein] + ADP + H(+). It catalyses the reaction L-threonyl-[protein] + ATP = O-phospho-L-threonyl-[protein] + ADP + H(+). Functionally, casein kinases are operationally defined by their preferential utilization of acidic proteins such as caseins as substrates. The alpha and alpha' chains contain the catalytic site. Participates in Wnt signaling. The protein is Casein kinase II subunit alpha' of Gallus gallus (Chicken).